Consider the following 370-residue polypeptide: Peptide chain release factor 1 (370 aa).

Glutamine 231 is subject to N5-methylglutamine. Positions 284 to 293 are enriched in basic and acidic residues; that stretch reads AREERERETR. A disordered region spans residues 284 to 303; that stretch reads AREERERETRAAQVGTGERS.

Belongs to the prokaryotic/mitochondrial release factor family. Post-translationally, methylated by PrmC. Methylation increases the termination efficiency of RF1.

It is found in the cytoplasm. In terms of biological role, peptide chain release factor 1 directs the termination of translation in response to the peptide chain termination codons UAG and UAA. The chain is Peptide chain release factor 1 from Deinococcus geothermalis (strain DSM 11300 / CIP 105573 / AG-3a).